The sequence spans 265 residues: Lipopolysaccharide core heptose(I) kinase WaaP (265 aa).

The active site involves D162.

Belongs to the protein kinase superfamily. KdkA/RfaP family. Requires Mg(2+) as cofactor.

The protein resides in the cell inner membrane. It carries out the reaction an L-alpha-D-Hep-(1-&gt;3)-L-alpha-D-Hep-(1-&gt;5)-[alpha-Kdo-(2-&gt;4)]-alpha-Kdo-(2-&gt;6)-lipid A + ATP = an L-alpha-D-Hep-(1-&gt;3)-4-O-phospho-L-alpha-D-Hep-(1-&gt;5)-[alpha-Kdo-(2-&gt;4)]-alpha-Kdo-(2-&gt;6)-lipid A + ADP + H(+). The enzyme catalyses L-alpha-D-Hep-(1-&gt;3)-L-alpha-D-Hep-(1-&gt;5)-[alpha-Kdo-(2-&gt;4)]-alpha-Kdo-(2-&gt;6)-lipid A (E. coli) + ATP = L-alpha-D-Hep-(1-&gt;3)-4-O-phospho-L-alpha-D-Hep-(1-&gt;5)-[alpha-Kdo-(2-&gt;4)]-alpha-Kdo-(2-&gt;6)-lipid A (E. coli) + ADP + H(+). It functions in the pathway bacterial outer membrane biogenesis; LPS core biosynthesis. Functionally, kinase involved in the biosynthesis of the core oligosaccharide region of lipopolysaccharide (LPS). Catalyzes the phosphorylation of heptose I (HepI), the first heptose added to the Kdo2-lipid A module. The sequence is that of Lipopolysaccharide core heptose(I) kinase WaaP from Escherichia coli.